The chain runs to 153 residues: Putative phosphatidylglycerol/phosphatidylinositol transfer protein DDB_G0285639 (153 aa).

An N-terminal signal peptide occupies residues 1–21 (MIIKILLLIISISLFLNISIG). Residues N17, N61, N87, N117, and N140 are each glycosylated (N-linked (GlcNAc...) asparagine).

Belongs to the NPC2 family. As to quaternary structure, monomer.

Catalyzes the intermembrane transfer of phosphatidylglycerol and phosphatidylinositol. The polypeptide is Putative phosphatidylglycerol/phosphatidylinositol transfer protein DDB_G0285639 (Dictyostelium discoideum (Social amoeba)).